A 21-amino-acid polypeptide reads, in one-letter code: Natriuretic peptide TsNP (21 aa).

A disulfide bridge connects residues cysteine 5 and cysteine 21.

Expressed by the venom gland.

The protein resides in the secreted. Its function is as follows. Scorpion venom natriuretic peptide that increases the perfusion pressure, glomerular filtration rate and urinary flow in the isolated perfused rat kidney assay. Induces a decrease of the percentages of renal transport for sodium, potassium and chloride and an increase of the urinary cGMP concentration. Also down-regulates the mRNA expression of natriuretic peptide receptor 1 (NPR1) in the kidneys whereas it up-regulates those of NPR2, NPR3 and guanylyl cyclase C (GUCY2C) mRNAs. May exhibit hypotensive and vasodepressor activities. This is Natriuretic peptide TsNP from Tityus serrulatus (Brazilian scorpion).